Here is a 96-residue protein sequence, read N- to C-terminus: Large ribosomal subunit protein bL21 (96 aa).

Belongs to the bacterial ribosomal protein bL21 family. In terms of assembly, part of the 50S ribosomal subunit. Contacts protein L20.

This protein binds to 23S rRNA in the presence of protein L20. In Hydrogenobaculum sp. (strain Y04AAS1), this protein is Large ribosomal subunit protein bL21.